Here is a 433-residue protein sequence, read N- to C-terminus: D-amino acid dehydrogenase (433 aa).

FAD is bound at residue 3 to 17; that stretch reads VVILGSGVVGVASAW.

It belongs to the DadA oxidoreductase family. Requires FAD as cofactor.

The enzyme catalyses a D-alpha-amino acid + A + H2O = a 2-oxocarboxylate + AH2 + NH4(+). The protein operates within amino-acid degradation; D-alanine degradation; NH(3) and pyruvate from D-alanine: step 1/1. Functionally, oxidative deamination of D-amino acids. In Erwinia tasmaniensis (strain DSM 17950 / CFBP 7177 / CIP 109463 / NCPPB 4357 / Et1/99), this protein is D-amino acid dehydrogenase.